The following is a 463-amino-acid chain: Phytase A (463 aa).

An N-terminal signal peptide occupies residues 1 to 19 (MAFFTVALSLYYLLSRVST). N26 carries N-linked (GlcNAc...) asparagine glycosylation. An intrachain disulfide couples C29 to C38. N-linked (GlcNAc...) asparagine glycosylation occurs at N41. The 1D-myo-inositol hexakisphosphate site is built by Q48, Y49, R79, H80, R83, and T86. 4 disulfide bridges follow: C69-C410, C211-C460, C260-C278, and C431-C439. H80 (nucleophile) is an active-site residue. Residues N103 and N118 are each glycosylated (N-linked (GlcNAc...) asparagine). R163 lines the 1D-myo-inositol hexakisphosphate pocket. N-linked (GlcNAc...) asparagine glycosylation occurs at N203. D207 is a binding site for 1D-myo-inositol hexakisphosphate. N226 is a glycosylation site (N-linked (GlcNAc...) asparagine). K297 provides a ligand contact to 1D-myo-inositol hexakisphosphate. N-linked (GlcNAc...) asparagine glycosylation is found at N331 and N335. 1D-myo-inositol hexakisphosphate contacts are provided by H357 and D358. N372 is a glycosylation site (N-linked (GlcNAc...) asparagine).

The protein belongs to the histidine acid phosphatase family. As to quaternary structure, monomer. Post-translationally, seems to be cleaved into at least two pieces, most likely due to proteases in the supernatant. The N-terminal fragment, called phyB seems to retain phytase activity.

The protein localises to the secreted. It catalyses the reaction 1D-myo-inositol hexakisphosphate + H2O = 1D-myo-inositol 1,2,4,5,6-pentakisphosphate + phosphate. The enzyme catalyses 1D-myo-inositol 1,2,4,5,6-pentakisphosphate + H2O = 1D-myo-inositol 1,2,5,6-tetrakisphosphate + phosphate. The catalysed reaction is 1D-myo-inositol 1,2,5,6-tetrakisphosphate + H2O = 1D-myo-inositol 1,2,6-trisphosphate + phosphate. It carries out the reaction 1D-myo-inositol 1,2,6-trisphosphate + H2O = 1D-myo-inositol 1,2-bisphosphate + phosphate. It catalyses the reaction 1D-myo-inositol 1,2-bisphosphate + H2O = 1D-myo-inositol 2-phosphate + phosphate. Catalyzes the phosphate monoester hydrolysis of phytic acid (myo-inositol hexakisphosphate), which results in the stepwise formation of myo-inositol pentakis-, tetrakis-, tris-, bis-, and monophosphates, as well as the liberation of inorganic phosphate. Myo-inositol 2-monophosphate is the end product. Has a broad substrate specificity and is also able to dephosphorylate other classic acid phosphatase substrates such as p-nitrophenyl phosphate, phenyl phosphate, fructose 1,6-bisphosphate, fructose 6-phosphate, glucose 6-phosphate, ribose 5-phosphate, alpha-glycerophosphate, beta-glycerophosphate, 3-phosphoglycerate, as well as ADP and ATP. This chain is Phytase A, found in Emericella nidulans (strain FGSC A4 / ATCC 38163 / CBS 112.46 / NRRL 194 / M139) (Aspergillus nidulans).